The sequence spans 393 residues: NADH-quinone oxidoreductase subunit D (393 aa).

Belongs to the complex I 49 kDa subunit family. As to quaternary structure, NDH-1 is composed of 14 different subunits. Subunits NuoB, C, D, E, F, and G constitute the peripheral sector of the complex.

The protein localises to the cell inner membrane. The catalysed reaction is a quinone + NADH + 5 H(+)(in) = a quinol + NAD(+) + 4 H(+)(out). NDH-1 shuttles electrons from NADH, via FMN and iron-sulfur (Fe-S) centers, to quinones in the respiratory chain. The immediate electron acceptor for the enzyme in this species is believed to be ubiquinone. Couples the redox reaction to proton translocation (for every two electrons transferred, four hydrogen ions are translocated across the cytoplasmic membrane), and thus conserves the redox energy in a proton gradient. This chain is NADH-quinone oxidoreductase subunit D, found in Ehrlichia ruminantium (strain Gardel).